We begin with the raw amino-acid sequence, 507 residues long: Transcription factor NIGTH1 (507 aa).

Disordered stretches follow at residues 139-172 (ASAA…TALD) and 238-268 (SREA…RKAR). Positions 152–161 (PKEHSEHHPL) are enriched in basic and acidic residues. The 61-residue stretch at 263–323 (PHRKARRCWS…HLQKYRLHTR (61 aa)) folds into the HTH myb-type domain. Positions 294–319 (PKQIRELMKVDGLTNDEVKSHLQKYR) form a DNA-binding region, H-T-H motif. The tract at residues 402-507 (AVAPPPPLPP…TTTSAGAINY (106 aa)) is disordered. Positions 412-433 (QQQLAPPYSAKSSASARLGSPD) are enriched in low complexity. Residues 437-446 (RGSGGGGGAA) show a composition bias toward gly residues. Acidic residues predominate over residues 456 to 476 (ESIEEEGEGEEREDDDDDDEM).

In terms of assembly, interacts with ACA5.

The protein localises to the nucleus. Functionally, probable transcription factor that may play a role in regulatory networks controlling development and metabolism. The chain is Transcription factor NIGTH1 from Oryza sativa subsp. japonica (Rice).